A 138-amino-acid chain; its full sequence is Large ribosomal subunit protein uL16 (138 aa).

Over residues 1 to 15 (MLSPRKVKYRKKQRG) the composition is skewed to basic residues. The segment at 1 to 20 (MLSPRKVKYRKKQRGRLSGE) is disordered.

This sequence belongs to the universal ribosomal protein uL16 family. Part of the 50S ribosomal subunit.

Its function is as follows. Binds 23S rRNA and is also seen to make contacts with the A and possibly P site tRNAs. This is Large ribosomal subunit protein uL16 from Borrelia turicatae (strain 91E135).